Consider the following 578-residue polypeptide: MKYVVVSGGVISGIGKGVLASSTGMLLKTLGLKVTSIKIDPYMNIDAGTMSPLEHGECFVLDDGGETDLDLGNYERYLGITLSRDHNITTGKIYSHVISRERRGDYLGKTVQIVPHLTNAIQDWIQRVSKIPVDDTGLEPDVCIIELGGTVGDIESAPFVEALRQFQFEVGRENFALIHVSLVPVIHGEQKTKPTQAAIKDLRSLGLIPDMIACRCSEELNRSTIDKIAMFCHVGPEQVVNVHDVNSTYHVPLLLLKQHMIDYLHSRLKLGEVPLTLEDKERGSQLLTNWENMTKNLDDSDDVVKIALVGKYTNLKDSYLSVTKSLEHASMKCRRQLEILWVEASNLEPETQEVDKNKFHDSWNKLSSADGILVPGGFGTRGIEGMILAAKWARESGVPFLGVCLGLQVAAIEFARNVIGRPNSSSTEFLDETLLAPEDQVVIYMPEIDKEHMGGTMRLGLRPTIFQPNSEWSNIRKLYGEVNEVHERHRHRYEINPKIVNDMESRGFIFVGKDETGQRCEIFELKGHPYYVGTQYHPEYTSKVLEPSRPFWGLVAAASGTLGEVIKDINLSEGNENE.

In terms of domain architecture, Glutamine amidotransferase type-1 spans 305–564; the sequence is KIALVGKYTN…VAAASGTLGE (260 aa). Active-site for GATase activity residues include Cys404, His537, and Glu539.

Belongs to the CTP synthase family. As to quaternary structure, homodimer. Oligomerizes to a tetramer in the presence of its substrates UTP and ATP. It depends on Mg(2+) as a cofactor.

The protein resides in the cytoplasm. The enzyme catalyses UTP + L-glutamine + ATP + H2O = CTP + L-glutamate + ADP + phosphate + 2 H(+). The protein operates within pyrimidine metabolism; CTP biosynthesis via de novo pathway; CTP from UDP: step 2/2. Its activity is regulated as follows. Activated by GTP. Subject to allosteric product inhibition by CTP. Inhibited by p-chloromercuriphenylsulfonic acid, N-ethylmaleimide and cyclopentenylcytosine (CPEC). Catalyzes the ATP-dependent amination of UTP to CTP with either L-glutamine or ammonia as the source of nitrogen. Plays an important role in the regulation of phospholipid synthesis. This chain is CTP synthase 2 (URA8), found in Saccharomyces cerevisiae (strain ATCC 204508 / S288c) (Baker's yeast).